Here is a 307-residue protein sequence, read N- to C-terminus: Ornithine carbamoyltransferase (307 aa).

Carbamoyl phosphate contacts are provided by residues 51–54 (STRT), glutamine 78, arginine 102, and 129–132 (HPVQ). Residues asparagine 159, aspartate 223, and 227 to 228 (SM) contribute to the L-ornithine site. Carbamoyl phosphate-binding positions include 263 to 264 (CL) and arginine 291.

The protein belongs to the aspartate/ornithine carbamoyltransferase superfamily. OTCase family.

It is found in the cytoplasm. It carries out the reaction carbamoyl phosphate + L-ornithine = L-citrulline + phosphate + H(+). Its pathway is amino-acid biosynthesis; L-arginine biosynthesis; L-arginine from L-ornithine and carbamoyl phosphate: step 1/3. In terms of biological role, reversibly catalyzes the transfer of the carbamoyl group from carbamoyl phosphate (CP) to the N(epsilon) atom of ornithine (ORN) to produce L-citrulline. In Wolinella succinogenes (strain ATCC 29543 / DSM 1740 / CCUG 13145 / JCM 31913 / LMG 7466 / NCTC 11488 / FDC 602W) (Vibrio succinogenes), this protein is Ornithine carbamoyltransferase.